Here is a 409-residue protein sequence, read N- to C-terminus: Peptidase T (409 aa).

His-80 is a Zn(2+) binding site. Asp-82 is a catalytic residue. Asp-143 lines the Zn(2+) pocket. The active-site Proton acceptor is the Glu-177. Zn(2+) is bound by residues Glu-178, Asp-200, and His-382.

The protein belongs to the peptidase M20B family. It depends on Zn(2+) as a cofactor.

It localises to the cytoplasm. It carries out the reaction Release of the N-terminal residue from a tripeptide.. Functionally, cleaves the N-terminal amino acid of tripeptides. The protein is Peptidase T of Alkaliphilus oremlandii (strain OhILAs) (Clostridium oremlandii (strain OhILAs)).